Reading from the N-terminus, the 469-residue chain is Glutamine synthetase (469 aa).

The GS beta-grasp domain occupies 14–99 (NDVKFVDLRF…VCDILDPVSG (86 aa)). Positions 106 to 469 (RRGTAKKAEA…PVEYDMYYSA (364 aa)) constitute a GS catalytic domain. Positions 131 and 133 each coordinate Mg(2+). Glutamate 209 contacts ATP. Glutamate 214 and aspartate 221 together coordinate Mg(2+). Residues 265–266 (NG) and glycine 266 each bind L-glutamate. Histidine 270 contacts Mg(2+). Residues 272-274 (HQS) and serine 274 contribute to the ATP site. L-glutamate-binding residues include arginine 322, glutamate 328, and arginine 340. Positions 340, 345, and 353 each coordinate ATP. Glutamate 358 lines the Mg(2+) pocket. Arginine 360 contributes to the L-glutamate binding site. An O-AMP-tyrosine modification is found at tyrosine 398.

This sequence belongs to the glutamine synthetase family. Oligomer of 12 subunits arranged in the form of two hexameric ring. The cofactor is Mg(2+).

Its subcellular location is the cytoplasm. The catalysed reaction is L-glutamate + NH4(+) + ATP = L-glutamine + ADP + phosphate + H(+). With respect to regulation, the activity of this enzyme could be controlled by adenylation under conditions of abundant glutamine. Functionally, catalyzes the ATP-dependent biosynthesis of glutamine from glutamate and ammonia. The polypeptide is Glutamine synthetase (Rhizobium leguminosarum bv. viciae).